The sequence spans 121 residues: Ribonuclease P protein component (121 aa).

This sequence belongs to the RnpA family. Consists of a catalytic RNA component (M1 or rnpB) and a protein subunit.

The catalysed reaction is Endonucleolytic cleavage of RNA, removing 5'-extranucleotides from tRNA precursor.. In terms of biological role, RNaseP catalyzes the removal of the 5'-leader sequence from pre-tRNA to produce the mature 5'-terminus. It can also cleave other RNA substrates such as 4.5S RNA. The protein component plays an auxiliary but essential role in vivo by binding to the 5'-leader sequence and broadening the substrate specificity of the ribozyme. This Geobacillus thermodenitrificans (strain NG80-2) protein is Ribonuclease P protein component.